We begin with the raw amino-acid sequence, 338 residues long: 3-dehydroquinate synthase (338 aa).

Belongs to the archaeal-type DHQ synthase family.

The enzyme catalyses 2-amino-2,3,7-trideoxy-D-lyxo-hept-6-ulosonate + NAD(+) + H2O = 3-dehydroquinate + NH4(+) + NADH + H(+). Its function is as follows. Catalyzes the oxidative deamination and cyclization of 2-amino-3,7-dideoxy-D-threo-hept-6-ulosonic acid (ADH) to yield 3-dehydroquinate (DHQ), which is fed into the canonical shikimic pathway of aromatic amino acid biosynthesis. The sequence is that of 3-dehydroquinate synthase from Cenarchaeum symbiosum (strain A).